A 357-amino-acid polypeptide reads, in one-letter code: UDP-N-acetylglucosamine 2-epimerase homolog (357 aa).

The protein belongs to the UDP-N-acetylglucosamine 2-epimerase family.

This chain is UDP-N-acetylglucosamine 2-epimerase homolog, found in Methanococcus maripaludis (strain DSM 14266 / JCM 13030 / NBRC 101832 / S2 / LL).